Consider the following 519-residue polypeptide: 2,3-bisphosphoglycerate-independent phosphoglycerate mutase (519 aa).

Mn(2+)-binding residues include aspartate 18 and serine 68. Serine 68 functions as the Phosphoserine intermediate in the catalytic mechanism. Substrate-binding positions include histidine 129, 159–160 (RD), arginine 191, arginine 197, 267–270 (RADR), and lysine 341. Mn(2+) contacts are provided by aspartate 408, histidine 412, aspartate 449, histidine 450, and histidine 468.

Belongs to the BPG-independent phosphoglycerate mutase family. In terms of assembly, monomer. Mn(2+) is required as a cofactor.

It carries out the reaction (2R)-2-phosphoglycerate = (2R)-3-phosphoglycerate. It participates in carbohydrate degradation; glycolysis; pyruvate from D-glyceraldehyde 3-phosphate: step 3/5. Functionally, catalyzes the interconversion of 2-phosphoglycerate and 3-phosphoglycerate. In Coxiella burnetii (strain RSA 331 / Henzerling II), this protein is 2,3-bisphosphoglycerate-independent phosphoglycerate mutase.